Consider the following 2774-residue polypeptide: Microtubule-associated protein 1A (2774 aa).

Phosphoserine is present on residues Ser114, Ser117, Ser118, Ser121, and Ser155. Position 177 is a phosphotyrosine (Tyr177). A disordered region spans residues 310–329 (PSKIKHRADSKESLKAAPKT). 2 positions are modified to phosphoserine: Ser319 and Ser322. Residues 336-338 (KRE) form repeat 1. Positions 336–541 (KREEVLEEGA…TQDFEELKRE (206 aa)) are 11 X 3 AA repeats of K-K-[DE]. Basic and acidic residues predominate over residues 342-390 (EEGAKEARSELAKELAKTEKKAKEPSEKPPEKPSKSERVRGESSEALKA). 9 disordered regions span residues 342 to 718 (EEGA…SFLS), 737 to 808 (TIPG…TELT), 845 to 939 (EDQS…VGKE), 957 to 1078 (FGAP…QTGC), 1093 to 1344 (ETGE…ILPE), 1357 to 1646 (QKDG…SPEQ), 1693 to 1725 (ESTF…KDFQ), 1739 to 1843 (LAES…VPFS), and 1861 to 2644 (AELE…LVNG). Ser384 carries the phosphoserine modification. Over residues 391–406 (EKRRLIKDKAGKKHLK) the composition is skewed to basic residues. Basic and acidic residues-rich tracts occupy residues 407-464 (EKIS…KPDL) and 484-500 (VKVD…ELSS). Tandem repeats lie at residues 415 to 417 (KKD), 420 to 422 (KKE), 424 to 426 (KKE), 427 to 429 (RKE), 431 to 433 (KKE), 436 to 438 (RKE), 440 to 442 (KKD), 444 to 446 (KKD), and 449 to 451 (RKD). Residue Thr504 is modified to Phosphothreonine. Over residues 506-516 (PAQKGAAPPAA) the composition is skewed to low complexity. A phosphoserine mark is found at Ser526 and Ser527. Composition is skewed to basic and acidic residues over residues 536 to 554 (EELK…DTGL) and 584 to 595 (EGEHVEREKEVV). Copy 11 of the repeat occupies 539-541 (KRE). 2 positions are modified to phosphoserine: Ser604 and Ser611. Basic and acidic residues-rich tracts occupy residues 614–631 (EVEK…REAE) and 638–675 (AARE…ETKA). A Phosphoserine modification is found at Ser643. A Phosphothreonine modification is found at Thr663. 4 positions are modified to phosphoserine: Ser666, Ser677, Ser690, and Ser785. Composition is skewed to polar residues over residues 845-858 (EDQS…PQTE) and 869-881 (TVTS…TEAT). Residues Ser872, Ser875, Ser876, and Ser889 each carry the phosphoserine modification. The residue at position 892 (Thr892) is a Phosphothreonine. A phosphoserine mark is found at Ser894, Ser898, Ser907, Ser980, Ser990, Ser998, Ser1007, Ser1013, Ser1022, Ser1029, Ser1037, Ser1061, Ser1132, Ser1134, Ser1148, Ser1160, Ser1178, Ser1188, Ser1191, Ser1197, Ser1206, and Ser1209. Residues 1008-1028 (PVEDKSEPRDFQEDSWGETKH) show a composition bias toward basic and acidic residues. Polar residues predominate over residues 1142-1157 (SVLSVVSPDTTKQEAT). Residues 1180 to 1190 (EDTQSLSFSEE) show a composition bias toward polar residues. Over residues 1198–1212 (LDISSKQLSPESLGT) the composition is skewed to polar residues. Basic and acidic residues predominate over residues 1220-1236 (LGKEERGPVMKAEDDSC). Phosphoserine is present on residues Ser1252, Ser1280, Ser1301, Ser1304, and Ser1307. The span at 1293-1308 (TSDSSLTKSPESLSSP) shows a compositional bias: low complexity. Basic and acidic residues-rich tracts occupy residues 1317 to 1336 (WEGK…ETRQ), 1357 to 1409 (QKDG…EDQG), 1416 to 1428 (AEKD…RDTD), 1436 to 1479 (EPRD…EHSI), and 1487 to 1574 (RAPD…KADS). Ser1504, Ser1568, Ser1574, and Ser1594 each carry phosphoserine. The span at 1599 to 1613 (SKAREQEKKYWKEQD) shows a compositional bias: basic and acidic residues. 7 positions are modified to phosphoserine: Ser1622, Ser1643, Ser1715, Ser1742, Ser1757, Ser1763, and Ser1767. Residues 1707–1718 (TPLQHTPRSPWT) show a composition bias toward polar residues. A Phosphothreonine modification is found at Thr1772. Phosphoserine is present on residues Ser1778 and Ser1784. Over residues 1789-1803 (TESTAPMRNEPTTPS) the composition is skewed to polar residues. Positions 1818–1839 (LPPAPLSPAPAPPTPAPEPHTP) are enriched in pro residues. Basic and acidic residues predominate over residues 1873-1885 (KDYRKAEGEREGE). Ser1897 bears the Phosphoserine mark. Basic and acidic residues predominate over residues 1908-1930 (ATRDTEQTEPEQREPTPYPDERS). At Thr1923 the chain carries Phosphothreonine. Residues 1984–1997 (SSPASPQNLQSDTP) show a composition bias toward polar residues. The residue at position 1988 (Ser1988) is a Phosphoserine. The segment covering 2008 to 2034 (AVPPRQEPDPGPNVEPSITPPAVPPRA) has biased composition (pro residues). The residue at position 2026 (Thr2026) is a Phosphothreonine. 2 positions are modified to phosphoserine: Ser2043 and Ser2077. The segment covering 2055-2092 (PDRRTPSPKETGRGHWDDGTNDSDLEKGAREQPEKETR) has biased composition (basic and acidic residues). Low complexity predominate over residues 2115–2125 (SSLSSDSHLGS). Over residues 2144–2153 (PAPPQLPSPA) the composition is skewed to pro residues. 6 positions are modified to phosphoserine: Ser2204, Ser2221, Ser2225, Ser2228, Ser2229, and Ser2260. Residues 2226 to 2237 (EGSSSEATTPVI) show a composition bias toward polar residues. Residues 2271–2287 (DLTPLSPAPSASLDLAP) show a composition bias toward low complexity. Positions 2288-2298 (APAPAPAPAPG) are enriched in pro residues. Residues 2299 to 2309 (LPGDLGDGTLP) show a composition bias toward low complexity. A compositionally biased stretch (basic and acidic residues) spans 2352–2364 (AEKEEAEAPHAWE). At Ser2424 the chain carries Phosphoserine. Low complexity predominate over residues 2477–2489 (SASDSGSSQSDSD). A compositionally biased stretch (pro residues) spans 2534–2550 (DPPPTPLPDPRPSPPRP). Over residues 2565-2575 (GRVERLREKGR) the composition is skewed to basic and acidic residues. The span at 2613–2623 (RTVPRPRSTPS) shows a compositional bias: low complexity. Phosphoserine is present on residues Ser2620 and Ser2635.

This sequence belongs to the MAP1 family. As to quaternary structure, 3 different light chains, LC1 (a cleavage product of MAP1B), LC2 (a cleavage product of MAP1A) and LC3 (produced by one of the MAP1LC3 genes), can associate with the MAP1A or MAP1B heavy chains. Interacts with guanylate kinase-like domain of DLG1, DLG2 and DLG4. Binds to CSNK1D. Interacts with TIAM2. In terms of assembly, interacts with ELAVL4. Phosphorylated by CSNK1D. In terms of processing, LC2 is generated from MAP1A by proteolytic processing. It is free to associate with both MAP1A and MAP1B. As to expression, brain, heart and muscle.

The protein localises to the cytoplasm. It is found in the cytoskeleton. Structural protein involved in the filamentous cross-bridging between microtubules and other skeletal elements. The protein is Microtubule-associated protein 1A (Map1a) of Rattus norvegicus (Rat).